Here is a 245-residue protein sequence, read N- to C-terminus: Transmembrane protein 116 (245 aa).

4 helical membrane passes run 24-44 (MAFVFSSLIPLLLMTPVFCLG), 88-108 (GIAIFLGSFVLSLLTIMVLLI), 141-161 (FYPVAFFCCWGPAVILMIIKL), and 173-195 (LYVLQALTATSQGLLNCGVYGWT).

Its subcellular location is the membrane. This is Transmembrane protein 116 (TMEM116) from Homo sapiens (Human).